Reading from the N-terminus, the 73-residue chain is Translation initiation factor IF-1 (73 aa).

An S1-like domain is found at methionine 1–arginine 73.

It belongs to the IF-1 family. Component of the 30S ribosomal translation pre-initiation complex which assembles on the 30S ribosome in the order IF-2 and IF-3, IF-1 and N-formylmethionyl-tRNA(fMet); mRNA recruitment can occur at any time during PIC assembly.

The protein localises to the cytoplasm. Functionally, one of the essential components for the initiation of protein synthesis. Stabilizes the binding of IF-2 and IF-3 on the 30S subunit to which N-formylmethionyl-tRNA(fMet) subsequently binds. Helps modulate mRNA selection, yielding the 30S pre-initiation complex (PIC). Upon addition of the 50S ribosomal subunit IF-1, IF-2 and IF-3 are released leaving the mature 70S translation initiation complex. In Chlamydia abortus (strain DSM 27085 / S26/3) (Chlamydophila abortus), this protein is Translation initiation factor IF-1.